The following is a 267-amino-acid chain: Phosphatidylcholine synthase (267 aa).

At 1-42 (MILWRIVRPGAAMAYVQTGLVLIAEAMDTQQDSLKPRPAMRA) the chain is on the cytoplasmic side. The chain crosses the membrane as a helical span at residues 43–63 (AAFSVHVFTAFGAAIALLAML). Residues 64–69 (EAVREH) are Periplasmic-facing. A helical membrane pass occupies residues 70–90 (WAAMFQWLGVALIIDAIDGPI). At 91–102 (ARRLDVKNVQPN) the chain is on the cytoplasmic side. The chain crosses the membrane as a helical span at residues 103 to 123 (WSGDVLDLVVDFVTYVFVPAY). Residue alanine 124 is a topological domain, periplasmic. Residues 125 to 145 (IVASGLLLPVAAPLLGVAIIV) traverse the membrane as a helical segment. The Cytoplasmic segment spans residues 146–162 (TSALYFADLRMKADDNH). The helical transmembrane segment at 163–183 (FRGFPALWNAAAFYLFLLHWP) threads the bilayer. Position 184 (proline 184) is a topological domain, periplasmic. Residues 185–205 (LWSTLLVAALVVLTFVPFHVL) traverse the membrane as a helical segment. The Cytoplasmic segment spans residues 206–215 (HPVRVVRLRW). The chain crosses the membrane as a helical span at residues 216-236 (LTMSLIGIWAVLSLYTLDMDF). Topologically, residues 237–239 (RVG) are periplasmic. The helical transmembrane segment at 240–260 (PGVTLALCAIALWISFSDALI) threads the bilayer. At 261–267 (RFARSFA) the chain is on the cytoplasmic side.

Belongs to the CDP-alcohol phosphatidyltransferase class-I family. Requires Mn(2+) as cofactor.

It localises to the cell inner membrane. It catalyses the reaction a CDP-1,2-diacyl-sn-glycerol + choline = a 1,2-diacyl-sn-glycero-3-phosphocholine + CMP + H(+). Functionally, condenses choline with CDP-diglyceride to produce phosphatidylcholine and CMP. This chain is Phosphatidylcholine synthase, found in Bradyrhizobium diazoefficiens (strain JCM 10833 / BCRC 13528 / IAM 13628 / NBRC 14792 / USDA 110).